The following is a 110-amino-acid chain: UPF0122 protein BPUM_1495 (110 aa).

This sequence belongs to the UPF0122 family.

In terms of biological role, might take part in the signal recognition particle (SRP) pathway. This is inferred from the conservation of its genetic proximity to ftsY/ffh. May be a regulatory protein. The chain is UPF0122 protein BPUM_1495 from Bacillus pumilus (strain SAFR-032).